Consider the following 89-residue polypeptide: Small ribosomal subunit protein uS15 (89 aa).

Positions 1–10 (MSITAERKAE) are enriched in basic and acidic residues. The interval 1–24 (MSITAERKAEVIQGNANKAGDTGS) is disordered.

This sequence belongs to the universal ribosomal protein uS15 family. In terms of assembly, part of the 30S ribosomal subunit. Forms a bridge to the 50S subunit in the 70S ribosome, contacting the 23S rRNA.

Functionally, one of the primary rRNA binding proteins, it binds directly to 16S rRNA where it helps nucleate assembly of the platform of the 30S subunit by binding and bridging several RNA helices of the 16S rRNA. Its function is as follows. Forms an intersubunit bridge (bridge B4) with the 23S rRNA of the 50S subunit in the ribosome. The protein is Small ribosomal subunit protein uS15 of Rhodopseudomonas palustris (strain HaA2).